The following is a 69-amino-acid chain: DNA gyrase inhibitor YacG (69 aa).

4 residues coordinate Zn(2+): Cys-13, Cys-16, Cys-32, and Cys-36.

The protein belongs to the DNA gyrase inhibitor YacG family. In terms of assembly, interacts with GyrB. It depends on Zn(2+) as a cofactor.

Its function is as follows. Inhibits all the catalytic activities of DNA gyrase by preventing its interaction with DNA. Acts by binding directly to the C-terminal domain of GyrB, which probably disrupts DNA binding by the gyrase. The polypeptide is DNA gyrase inhibitor YacG (Neisseria meningitidis serogroup B (strain ATCC BAA-335 / MC58)).